The sequence spans 933 residues: uncharacterized protein (933 aa).

The span at 244–255 shows a compositional bias: basic and acidic residues; sequence KKDIGAKPKPVD. Disordered stretches follow at residues 244–277 and 343–364; these read KKDI…ELPD and SAPH…EWKG. The segment covering 343–353 has biased composition (polar residues); that stretch reads SAPHQPSSQHA. The helical transmembrane segment at 771–791 threads the bilayer; the sequence is VIHGMVLMFAGGKLLFGGCVL. Over residues 890 to 907 the composition is skewed to basic and acidic residues; sequence DKIEKEPPPSPEKVKPPE. The segment at 890–933 is disordered; sequence DKIEKEPPPSPEKVKPPEIELQPFTKMRRSSKKTAGFKKLNSKK. Over residues 915–933 the composition is skewed to basic residues; the sequence is KMRRSSKKTAGFKKLNSKK.

It is found in the membrane. This is an uncharacterized protein from Mus musculus (Mouse).